The primary structure comprises 190 residues: MIGKLTGTLLEKNPPEVLVDCHGVGYEVLVSMSTFYNLPAVGERVSLLTQFIVREDAQLLYGFGTAQERQAFRELIKISGVGPRTALSILSGMGVADLAQAVSLQEAGRLVKVPGIGKKTAERLLLELKGKLGADVGVRAHAANDNQADILQALLALGYNDKEAAAALKALPADVGVSEGIKLALKSLSK.

The tract at residues 1–64 (MIGKLTGTLL…EDAQLLYGFG (64 aa)) is domain I. The tract at residues 65–137 (TAQERQAFRE…LKGKLGADVG (73 aa)) is domain II. Residues 137-141 (GVRAH) form a flexible linker region. A domain III region spans residues 142-190 (AANDNQADILQALLALGYNDKEAAAALKALPADVGVSEGIKLALKSLSK).

It belongs to the RuvA family. In terms of assembly, homotetramer. Forms an RuvA(8)-RuvB(12)-Holliday junction (HJ) complex. HJ DNA is sandwiched between 2 RuvA tetramers; dsDNA enters through RuvA and exits via RuvB. An RuvB hexamer assembles on each DNA strand where it exits the tetramer. Each RuvB hexamer is contacted by two RuvA subunits (via domain III) on 2 adjacent RuvB subunits; this complex drives branch migration. In the full resolvosome a probable DNA-RuvA(4)-RuvB(12)-RuvC(2) complex forms which resolves the HJ.

It localises to the cytoplasm. Functionally, the RuvA-RuvB-RuvC complex processes Holliday junction (HJ) DNA during genetic recombination and DNA repair, while the RuvA-RuvB complex plays an important role in the rescue of blocked DNA replication forks via replication fork reversal (RFR). RuvA specifically binds to HJ cruciform DNA, conferring on it an open structure. The RuvB hexamer acts as an ATP-dependent pump, pulling dsDNA into and through the RuvAB complex. HJ branch migration allows RuvC to scan DNA until it finds its consensus sequence, where it cleaves and resolves the cruciform DNA. This chain is Holliday junction branch migration complex subunit RuvA, found in Acidovorax ebreus (strain TPSY) (Diaphorobacter sp. (strain TPSY)).